The chain runs to 101 residues: Protein RnfH (101 aa).

This sequence belongs to the UPF0125 (RnfH) family.

The sequence is that of Protein RnfH from Coxiella burnetii (strain RSA 331 / Henzerling II).